We begin with the raw amino-acid sequence, 500 residues long: Pyruvate kinase 1 (500 aa).

S2 is subject to N-acetylserine. S9 and S16 each carry phosphoserine. Phosphothreonine is present on T31. Position 49 (R49) interacts with substrate. 2 residues coordinate K(+): N51 and S53. 51-54 (NFSH) provides a ligand contact to ATP. At S70 the chain carries Phosphoserine. K(+) contacts are provided by D84 and T85. R91 provides a ligand contact to ATP. Residues K119, K124, K161, K164, and K166 each participate in a glycyl lysine isopeptide (Lys-Gly) (interchain with G-Cter in URM1) cross-link. K177 lines the ATP pocket. Position 184 is a phosphothreonine (T184). Residue K204 forms a Glycyl lysine isopeptide (Lys-Gly) (interchain with G-Cter in ubiquitin) linkage. Phosphoserine is present on S213. K240 lines the substrate pocket. E242 contacts Mn(2+). K255 participates in a covalent cross-link: Glycyl lysine isopeptide (Lys-Gly) (interchain with G-Cter in ubiquitin). Substrate is bound by residues G265 and D266. D266 contributes to the Mn(2+) binding site. A Glycyl lysine isopeptide (Lys-Gly) (interchain with G-Cter in URM1) cross-link involves residue K292. T298 serves as a coordination point for substrate. At S316 the chain carries Phosphoserine. A Glycyl lysine isopeptide (Lys-Gly) (interchain with G-Cter in URM1) cross-link involves residue K394. Residue 402-407 (STSGTT) participates in beta-D-fructose 1,6-bisphosphate binding. C418 is subject to Cysteine persulfide. K446 is covalently cross-linked (Glycyl lysine isopeptide (Lys-Gly) (interchain with G-Cter in ubiquitin); alternate). K446 is covalently cross-linked (Glycyl lysine isopeptide (Lys-Gly) (interchain with G-Cter in URM1); alternate). S450 carries the phosphoserine modification. Beta-D-fructose 1,6-bisphosphate is bound by residues W452 and R459. T478 is modified (phosphothreonine). Position 484 (G484) interacts with beta-D-fructose 1,6-bisphosphate.

It belongs to the pyruvate kinase family. In terms of assembly, homotetramer. It depends on Mg(2+) as a cofactor. K(+) is required as a cofactor. Post-translationally, conjugated to URM1, a ubiquitin-like protein, in response to oxidative stresses. The attachment of URM1 to lysine residues exclusively depends on the presence of a peroxidatic cysteine in the target protein, with low specificity for the particular residue, motif, or structural context at which urmylation can occur. The URM1-conjugation reaction is mechanistically and directly coupled to the process of cysteine persulfidation, transfering the sulfur atom of the URM1 thiocarboxyl group to redox-active cysteine residues in the target protein if it is exposed to oxidative conditions. Persulfidated on specific redox-active cysteine residues. Persulfidation (also called protein S-sulfhydration) may provide a molecular mechanism that enables cells to protect vulnerable cysteine residues from reactive oxygen species (ROS) under stress conditions.

The catalysed reaction is pyruvate + ATP = phosphoenolpyruvate + ADP + H(+). The protein operates within carbohydrate degradation; glycolysis; pyruvate from D-glyceraldehyde 3-phosphate: step 5/5. With respect to regulation, the activity is regulated by glucose levels. Activated by fructose-1,6-bisphosphate. The sequence is that of Pyruvate kinase 1 (CDC19) from Saccharomyces cerevisiae (strain ATCC 204508 / S288c) (Baker's yeast).